Reading from the N-terminus, the 105-residue chain is MGKLTLLLLALLVWLQYSLWFGKNGLHDYTRVNDDVTAQQATNAKLKARNDQLFAEIDDLNGGQEAIEERARNELSMTRPGETFYRLVPDASKRNQASGQQQNNR.

Topologically, residues 1–3 (MGK) are cytoplasmic. Residues 4–21 (LTLLLLALLVWLQYSLWF) form a helical membrane-spanning segment. Over 22–105 (GKNGLHDYTR…QASGQQQNNR (84 aa)) the chain is Periplasmic. The stretch at 33–62 (NDDVTAQQATNAKLKARNDQLFAEIDDLNG) forms a coiled coil.

The protein belongs to the FtsB family. In terms of assembly, part of a complex composed of FtsB, FtsL and FtsQ.

The protein resides in the cell inner membrane. Essential cell division protein. May link together the upstream cell division proteins, which are predominantly cytoplasmic, with the downstream cell division proteins, which are predominantly periplasmic. The sequence is that of Cell division protein FtsB from Klebsiella aerogenes (Enterobacter aerogenes).